Here is a 240-residue protein sequence, read N- to C-terminus: Ubiquinone biosynthesis O-methyltransferase (240 aa).

The S-adenosyl-L-methionine site is built by R44, G64, D85, and M129.

Belongs to the methyltransferase superfamily. UbiG/COQ3 family.

The enzyme catalyses a 3-demethylubiquinol + S-adenosyl-L-methionine = a ubiquinol + S-adenosyl-L-homocysteine + H(+). It carries out the reaction a 3-(all-trans-polyprenyl)benzene-1,2-diol + S-adenosyl-L-methionine = a 2-methoxy-6-(all-trans-polyprenyl)phenol + S-adenosyl-L-homocysteine + H(+). It functions in the pathway cofactor biosynthesis; ubiquinone biosynthesis. Functionally, O-methyltransferase that catalyzes the 2 O-methylation steps in the ubiquinone biosynthetic pathway. The polypeptide is Ubiquinone biosynthesis O-methyltransferase (Escherichia coli (strain K12 / MC4100 / BW2952)).